We begin with the raw amino-acid sequence, 227 residues long: Flagellar transcriptional regulator FtcR (227 aa).

The region spanning 1-116 is the Response regulatory domain; it reads MIVVVDDRDM…EILARINAIR (116 aa). The segment at residues 127–226 is a DNA-binding region (ompR/PhoB-type); the sequence is ADGTQLGPIR…KRFLGYCINI (100 aa).

In terms of biological role, required for transcription of flagellar genes. The polypeptide is Flagellar transcriptional regulator FtcR (ftcR) (Brucella abortus (strain 2308)).